The chain runs to 205 residues: Protein GrpE (205 aa).

Residues 172-205 form a disordered region; it reads KGSTGPGAPAEPAAAPNPYASNGADTGGSFDTKA. The span at 177–195 shows a compositional bias: low complexity; the sequence is PGAPAEPAAAPNPYASNGA.

Belongs to the GrpE family. Homodimer.

The protein localises to the cytoplasm. Its function is as follows. Participates actively in the response to hyperosmotic and heat shock by preventing the aggregation of stress-denatured proteins, in association with DnaK and GrpE. It is the nucleotide exchange factor for DnaK and may function as a thermosensor. Unfolded proteins bind initially to DnaJ; upon interaction with the DnaJ-bound protein, DnaK hydrolyzes its bound ATP, resulting in the formation of a stable complex. GrpE releases ADP from DnaK; ATP binding to DnaK triggers the release of the substrate protein, thus completing the reaction cycle. Several rounds of ATP-dependent interactions between DnaJ, DnaK and GrpE are required for fully efficient folding. The chain is Protein GrpE from Caulobacter sp. (strain K31).